The sequence spans 42 residues: MADIGTTGRIPLWLVGTVAGTAAIGLLGIFFYGSYVGLGSSL.

A helical membrane pass occupies residues 10–30 (IPLWLVGTVAGTAAIGLLGIF).

The protein belongs to the PsbJ family. PSII is composed of 1 copy each of membrane proteins PsbA, PsbB, PsbC, PsbD, PsbE, PsbF, PsbH, PsbI, PsbJ, PsbK, PsbL, PsbM, PsbT, PsbX, PsbY, PsbZ, Psb30/Ycf12, at least 3 peripheral proteins of the oxygen-evolving complex and a large number of cofactors. It forms dimeric complexes.

It is found in the plastid. Its subcellular location is the chloroplast thylakoid membrane. One of the components of the core complex of photosystem II (PSII). PSII is a light-driven water:plastoquinone oxidoreductase that uses light energy to abstract electrons from H(2)O, generating O(2) and a proton gradient subsequently used for ATP formation. It consists of a core antenna complex that captures photons, and an electron transfer chain that converts photonic excitation into a charge separation. The sequence is that of Photosystem II reaction center protein J from Pleurastrum terricola (Filamentous green alga).